We begin with the raw amino-acid sequence, 430 residues long: Adenylosuccinate synthetase (430 aa).

GTP is bound by residues 13–19 (GDEGKGK) and 41–43 (GHT). The active-site Proton acceptor is the Asp14. Mg(2+) is bound by residues Asp14 and Gly41. IMP-binding positions include 14–17 (DEGK), 39–42 (NAGH), Thr130, Arg144, Gln225, Thr240, and Arg304. His42 (proton donor) is an active-site residue. Residue 300 to 306 (ATTGRAR) participates in substrate binding. Residues Arg306, 332–334 (KLD), and 414–416 (STG) contribute to the GTP site.

The protein belongs to the adenylosuccinate synthetase family. As to quaternary structure, homodimer. Mg(2+) is required as a cofactor.

Its subcellular location is the cytoplasm. The enzyme catalyses IMP + L-aspartate + GTP = N(6)-(1,2-dicarboxyethyl)-AMP + GDP + phosphate + 2 H(+). It functions in the pathway purine metabolism; AMP biosynthesis via de novo pathway; AMP from IMP: step 1/2. Its function is as follows. Plays an important role in the de novo pathway of purine nucleotide biosynthesis. Catalyzes the first committed step in the biosynthesis of AMP from IMP. This Pseudomonas aeruginosa (strain LESB58) protein is Adenylosuccinate synthetase.